A 1275-amino-acid polypeptide reads, in one-letter code: Inner capsid protein lambda-1 (1275 aa).

A compositionally biased stretch (basic residues) spans 1 to 12 (MKRIPRKTKGKS). The disordered stretch occupies residues 1–149 (MKRIPRKTKG…DNEGGSNQKP (149 aa)). Composition is skewed to basic and acidic residues over residues 18-35 (DSTERSDDGSSQLRDKQN) and 75-117 (NNDE…DKSK). A compositionally biased stretch (polar residues) spans 118-149 (AQVTYSDTGINNANELSRSGNVDNEGGSNQKP). Residues 181-203 (YQCHVCSAVLFSPLDLDAHVASH) form a C2H2-type zinc finger.

The protein belongs to the turreted BTV-fold inner capsid family. In terms of assembly, homodecamer; each decamer is made up of two conformers of VP2, called VP2A and VP2B. 12 homodecamers assemble to form an icosahedral capsid. Interacts with protein mu-NS; in viral inclusions. Mg(2+) is required as a cofactor. It depends on Mn(2+) as a cofactor.

It is found in the virion. It carries out the reaction ATP + H2O = ADP + phosphate + H(+). Inner capsid protein that self-assembles to form an icosahedral capsid with a T=2 symmetry, which consists of 120 copies of VP2, with channels at each of its five-fold vertices. This capsid constitutes the innermost concentric layer of the viral mature particle. Its function is as follows. Displays NTPase, RNA 5'-triphosphatase (RTPase) and RNA helicase activities and probably participates in transcription of the viral genome. Helicase activity might be involved in unwinding or reannealing dsRNA during RNA synthesis. RTPase enzymatic activity represents the first step in RNA capping, which yields a 5'-diphosphorylated plus-strand RNA. The protein is Inner capsid protein lambda-1 (L3) of Reovirus type 1 (strain Lang) (T1L).